The sequence spans 1213 residues: DNA-directed RNA polymerase subunit beta' (1213 aa).

Residues cysteine 60, cysteine 62, cysteine 75, and cysteine 78 each contribute to the Zn(2+) site. Mg(2+) contacts are provided by aspartate 450, aspartate 452, and aspartate 454. Residues cysteine 819, cysteine 893, cysteine 900, and cysteine 903 each contribute to the Zn(2+) site.

This sequence belongs to the RNA polymerase beta' chain family. The RNAP catalytic core consists of 2 alpha, 1 beta, 1 beta' and 1 omega subunit. When a sigma factor is associated with the core the holoenzyme is formed, which can initiate transcription. Mg(2+) is required as a cofactor. It depends on Zn(2+) as a cofactor.

The catalysed reaction is RNA(n) + a ribonucleoside 5'-triphosphate = RNA(n+1) + diphosphate. DNA-dependent RNA polymerase catalyzes the transcription of DNA into RNA using the four ribonucleoside triphosphates as substrates. This Streptococcus pyogenes serotype M4 (strain MGAS10750) protein is DNA-directed RNA polymerase subunit beta'.